The sequence spans 196 residues: ATP-dependent Clp protease proteolytic subunit (196 aa).

Serine 101 serves as the catalytic Nucleophile. Residue histidine 126 is part of the active site.

The protein belongs to the peptidase S14 family. In terms of assembly, component of the chloroplastic Clp protease core complex.

The protein resides in the plastid. Its subcellular location is the chloroplast stroma. It carries out the reaction Hydrolysis of proteins to small peptides in the presence of ATP and magnesium. alpha-casein is the usual test substrate. In the absence of ATP, only oligopeptides shorter than five residues are hydrolyzed (such as succinyl-Leu-Tyr-|-NHMec, and Leu-Tyr-Leu-|-Tyr-Trp, in which cleavage of the -Tyr-|-Leu- and -Tyr-|-Trp bonds also occurs).. In terms of biological role, cleaves peptides in various proteins in a process that requires ATP hydrolysis. Has a chymotrypsin-like activity. Plays a major role in the degradation of misfolded proteins. In Helianthus annuus (Common sunflower), this protein is ATP-dependent Clp protease proteolytic subunit.